The following is a 167-amino-acid chain: Gametocyte-specific factor 1 homolog (167 aa).

CHHC U11-48K-type zinc fingers lie at residues Met1–Tyr28 and Leu34–Asn61. Residues Cys4, His10, His20, Cys24, Cys37, His43, His53, and Cys57 each contribute to the Zn(2+) site. Positions Glu128–Arg161 are enriched in basic and acidic residues. The disordered stretch occupies residues Glu128–Gln167.

It belongs to the UPF0224 (FAM112) family. As to quaternary structure, interacts with piwi.

The protein resides in the nucleus. Its function is as follows. Acts via the piwi-interacting RNA (piRNA) pathway which mediates the repression of transposable elements during meiosis by forming complexes composed of piRNAs and piwi proteins and governs the methylation and subsequent repression of transposons. Required for repression of transposons and neighboring genes in ovarian somatic and germline cells. This Drosophila melanogaster (Fruit fly) protein is Gametocyte-specific factor 1 homolog.